Here is a 380-residue protein sequence, read N- to C-terminus: Transporter PPE51 (380 aa).

At M1 the chain carries N-acetylmethionine.

Belongs to the mycobacterial PPE family. Interacts with PE19 and PE25.

It is found in the cell outer membrane. Small molecule-selective channel required for the uptake of nutrients across the outer mycomembrane. Transports glycerol and glucose. Involved in sensitivity to M.tuberculosis growth inhibitory agrichemical 3,3-bis-di(methylsulfonyl)propionamide (3bMP1). Transports maltose and lactose disaccharides. Involved in sensitivity to bactericidal thio-disaccharide T-6 compound (1,6-anhydro-3-deoxy-4-S-(2,3,4,6-tetra-O-acetyl-beta-D-glucopyranosyl)-D-glycero-hexopyranos-2-ulose). Transports extracellular trehalose, a component of the cell envelope, and trehalose analog, 6-azido trehalose (6-TreAz), which has antimycobacterial activity. In terms of biological role, plays a role in response to starvation and stress, likely environment within the host. Inhibits canonical autophagy in infected mouse RAW264.7 macrophages. Inhibits autophagy and enhances intracellular bacterial survival when expressed in human macrophage-like THP-1 cells. Inhibits Toll-like receptor 2 (TLR2)-dependent signaling leading to autophagy inhibition, increased intracellular bacterial survival, reduced phagocytosis and reduced secretion of interleukin 6 (IL-6) and IL-1 in infected mouse primary bone marrow-derived macrophage (BMDM) cells. Required for virulence and persistence in the lungs and spleens of intranasally infected C57BL/6J mice. Blocks the antibacterial effects of TLR2 activation, suppresses MHC class II-dependent antigen presentation, and reduces IFN-gamma and TNF-alpha-producing CD4(+) T cells during infection in C57BL/6J mice. This is Transporter PPE51 (PPE51) from Mycobacterium tuberculosis (strain CDC 1551 / Oshkosh).